Reading from the N-terminus, the 485-residue chain is NADH-quinone oxidoreductase subunit N (485 aa).

The next 14 helical transmembrane spans lie at 8 to 28 (LIALLPLLIVGLTVVVVMLSI), 35 to 55 (FINTTLTVIGLNLALLSLYFV), 75 to 95 (LYIGLVLVASLATATFAYSWL), 104 to 124 (EFYLLVLIATVGGILLACANH), 125 to 145 (LASLFIGIELLTLPLFGLIGY), 159 to 179 (YMLLSAAASSFMLFGIALLYA), 203 to 223 (ILSGLGMLVVGLGFKLSLVPF), 235 to 255 (PAPVSTFLATASKIAIFAVVI), 271 to 291 (TVLTVIAIASMLFGNLMALTQ), 297 to 317 (LLGYSSIAHLGYLLVALVAVQ), 326 to 346 (VGIYLAGYLFSSIGAFGVVSL), 383 to 403 (LAGIPMTFGFIGKFYVIVLGV), 406 to 426 (ELWWLTGAVVVGSAIGLYYYL), and 455 to 475 (MVVLISALLVLALGIWPQPLI).

The protein belongs to the complex I subunit 2 family. NDH-1 is composed of 13 different subunits. Subunits NuoA, H, J, K, L, M, N constitute the membrane sector of the complex.

Its subcellular location is the cell inner membrane. It catalyses the reaction a quinone + NADH + 5 H(+)(in) = a quinol + NAD(+) + 4 H(+)(out). Functionally, NDH-1 shuttles electrons from NADH, via FMN and iron-sulfur (Fe-S) centers, to quinones in the respiratory chain. The immediate electron acceptor for the enzyme in this species is believed to be ubiquinone. Couples the redox reaction to proton translocation (for every two electrons transferred, four hydrogen ions are translocated across the cytoplasmic membrane), and thus conserves the redox energy in a proton gradient. The polypeptide is NADH-quinone oxidoreductase subunit N (Photorhabdus laumondii subsp. laumondii (strain DSM 15139 / CIP 105565 / TT01) (Photorhabdus luminescens subsp. laumondii)).